A 391-amino-acid chain; its full sequence is UPF0229 protein CLL_A3091 (391 aa).

Disordered stretches follow at residues 1-23 (MAIF…DKRR) and 75-107 (VATG…GNEE). Positions 80 to 92 (GEEKRGDKIESGS) are enriched in basic and acidic residues.

Belongs to the UPF0229 family.

This is UPF0229 protein CLL_A3091 from Clostridium botulinum (strain Eklund 17B / Type B).